A 78-amino-acid polypeptide reads, in one-letter code: Large ribosomal subunit protein bL28B (78 aa).

This sequence belongs to the bacterial ribosomal protein bL28 family.

The chain is Large ribosomal subunit protein bL28B (rpmB2) from Streptomyces coelicolor (strain ATCC BAA-471 / A3(2) / M145).